Reading from the N-terminus, the 266-residue chain is Imidazole glycerol phosphate synthase subunit HisF (266 aa).

Residues aspartate 11 and aspartate 130 contribute to the active site.

It belongs to the HisA/HisF family. Heterodimer of HisH and HisF.

The protein localises to the cytoplasm. The catalysed reaction is 5-[(5-phospho-1-deoxy-D-ribulos-1-ylimino)methylamino]-1-(5-phospho-beta-D-ribosyl)imidazole-4-carboxamide + L-glutamine = D-erythro-1-(imidazol-4-yl)glycerol 3-phosphate + 5-amino-1-(5-phospho-beta-D-ribosyl)imidazole-4-carboxamide + L-glutamate + H(+). Its pathway is amino-acid biosynthesis; L-histidine biosynthesis; L-histidine from 5-phospho-alpha-D-ribose 1-diphosphate: step 5/9. Its function is as follows. IGPS catalyzes the conversion of PRFAR and glutamine to IGP, AICAR and glutamate. The HisF subunit catalyzes the cyclization activity that produces IGP and AICAR from PRFAR using the ammonia provided by the HisH subunit. The protein is Imidazole glycerol phosphate synthase subunit HisF of Nitrosopumilus maritimus (strain SCM1).